A 1051-amino-acid chain; its full sequence is Leucine zipper protein 1 (1051 aa).

Alanine 2 is modified (N-acetylalanine). The stretch at alanine 11 to leucine 354 forms a coiled coil. Disordered stretches follow at residues isoleucine 247–asparagine 293, arginine 374–glutamate 401, alanine 432–threonine 554, and alanine 569–proline 601. Residues lysine 254–asparagine 293 are compositionally biased toward basic and acidic residues. Phosphoserine occurs at positions 256, 261, 395, 513, 571, 575, 612, and 660. The span at alanine 569–glycine 578 shows a compositional bias: polar residues. Residues valine 675–asparagine 727 form a disordered region. A Phosphothreonine modification is found at threonine 680. Position 691 is a phosphoserine (serine 691). Residues glutamate 707–lysine 720 show a composition bias toward basic and acidic residues. Phosphoserine is present on serine 746. Residues valine 789–isoleucine 799 show a composition bias toward low complexity. The segment at valine 789–asparagine 837 is disordered. The tract at residues serine 834–proline 884 is required for interaction with FLNA. Serine 906 is modified (phosphoserine). Residues arginine 929–proline 938 show a composition bias toward basic and acidic residues. Residues arginine 929–valine 1000 form a disordered region. 2 stretches are compositionally biased toward polar residues: residues glutamate 946–aspartate 958 and arginine 989–glutamate 999. At threonine 957 the chain carries Phosphothreonine. Residue serine 993 is modified to Phosphoserine.

In terms of assembly, component of the CERF-1 ISWI chromatin remodeling complex (also called the CECR2-containing remodeling factor (CERF) complex) at least composed of CECR2 and SMARCA1. Component of the CERF-5 ISWI chromatin remodeling complex at least composed of CECR2 and SMARCA5/SNF2H. LUZP1 is detected as part of the CERF-1 and CERF-5 complexes in embryonic stem (ES) cells where it is involved in complex stabilization but is not detected in the complexes in the testis. Interacts (via C-terminus) with LIMA1/EPLIN; both proteins restrict ciliation and may work together to regulate this process. Interacts with myosin light chain MYL9; the interaction results in inhibition of phosphorylation of MYL9 by DAPK3. Interacts with DAPK3; the interaction is likely to occur throughout the cell cycle and reduces the LUZP1-mediated suppression of MYL9 phosphorylation. Interacts with the chromosomal passenger complex (CPC); CPC kinase activity is required for localization of LUZP1 to the centromere. In terms of tissue distribution, expressed in cerebral cortex, cerebellum, hippocampus and brain stem.

It is found in the cytoplasm. The protein resides in the cytoskeleton. It localises to the microtubule organizing center. The protein localises to the centrosome. Its subcellular location is the cilium basal body. It is found in the midbody. The protein resides in the chromosome. It localises to the centromere. The protein localises to the spindle. Its subcellular location is the stress fiber. It is found in the nucleus. The protein resides in the cell projection. It localises to the dendrite. The protein localises to the perikaryon. Its subcellular location is the cell junction. It is found in the tight junction. Its function is as follows. F-actin cross-linking protein. Stabilizes actin and acts as a negative regulator of primary cilium formation. Positively regulates the phosphorylation of both myosin II and protein phosphatase 1 regulatory subunit PPP1R12A/MYPT1 and promotes the assembly of myosin II stacks within actin stress fibers. Inhibits the phosphorylation of myosin light chain MYL9 by DAPK3 and suppresses the constriction velocity of the contractile ring during cytokinesis. Binds to microtubules and promotes epithelial cell apical constriction by up-regulating levels of diphosphorylated myosin light chain (MLC) through microtubule-dependent inhibition of MLC dephosphorylation by myosin phosphatase. Involved in regulation of cell migration, nuclear size and centriole number, probably through regulation of the actin cytoskeleton. Component of the CERF-1 and CERF-5 chromatin remodeling complexes in embryonic stem cells where it acts to stabilize the complexes. Plays a role in embryonic brain and cardiovascular development. The chain is Leucine zipper protein 1 (Luzp1) from Rattus norvegicus (Rat).